The sequence spans 131 residues: Methylglyoxal synthase (131 aa).

One can recognise an MGS-like domain in the interval 1–131 (MKIALIAHDK…GDLDYRKLRK (131 aa)). Residues H8, K12, 34 to 37 (TGTT), and 54 to 55 (SG) each bind substrate. The active-site Proton donor/acceptor is the D60. H87 contributes to the substrate binding site.

The protein belongs to the methylglyoxal synthase family.

The enzyme catalyses dihydroxyacetone phosphate = methylglyoxal + phosphate. Catalyzes the formation of methylglyoxal from dihydroxyacetone phosphate. The chain is Methylglyoxal synthase from Bacillus anthracis (strain A0248).